The sequence spans 246 residues: Chloroplastic group IIB intron splicing facilitator CRS2-A, chloroplastic (246 aa).

The N-terminal 34 residues, 1 to 34, are a transit peptide targeting the chloroplast; sequence MFCASSSPITSPLYPKAYKFSQTKSNSKRFSSLR. Tyrosine 64 provides a ligand contact to tRNA. Histidine 69 functions as the Proton acceptor in the catalytic mechanism. Residues tyrosine 114, asparagine 116, and asparagine 162 each coordinate tRNA.

Belongs to the PTH family. CRS2 subfamily. In terms of assembly, part of large ribonucleo-protein complexes that include group IIB introns and either CAF1 or CAF2.

It localises to the plastid. The protein resides in the chloroplast stroma. Functionally, required for the splicing of group IIB introns in chloroplasts. This is Chloroplastic group IIB intron splicing facilitator CRS2-A, chloroplastic (CRS2A) from Arabidopsis thaliana (Mouse-ear cress).